The sequence spans 1507 residues: DE-cadherin (1507 aa).

An N-terminal signal peptide occupies residues 1-69; that stretch reads MSTSVQRMSR…AISLLSPALA (69 aa). A propeptide spanning residues 70–261 is cleaved from the precursor; sequence LHSPPDKNFS…IYLKRPIDKR (192 aa). 7 Cadherin domains span residues 97 to 195, 204 to 301, 311 to 412, 420 to 522, 532 to 633, 631 to 733, and 741 to 835; these read VKEE…APAF, MSEN…PPSF, LKEN…IPYY, ILEN…KPHF, LLED…TILE, ILEE…APFL, and WQEN…NDNA. Over 262–1328 the chain is Extracellular; the sequence is PGQSYAIIVR…VAFSFGIDRN (1067 aa). N-linked (GlcNAc...) asparagine glycosylation is found at asparagine 317, asparagine 466, and asparagine 552. N-linked (GlcNAc...) asparagine glycans are attached at residues asparagine 766, asparagine 949, asparagine 983, asparagine 999, and asparagine 1073. An EGF-like domain is found at 1084–1123; it reads VQAQCVCEAPLMRRCLNGGSPRYGENDVCDCIDGFTGPHC. 2 cysteine pairs are disulfide-bonded: cysteine 1098–cysteine 1112 and cysteine 1114–cysteine 1123. Positions 1125 to 1313 constitute a Laminin G-like domain; the sequence is LVSVAFYGSG…SVFRNIDSGC (189 aa). Asparagine 1145, asparagine 1274, and asparagine 1290 each carry an N-linked (GlcNAc...) asparagine glycan. An intrachain disulfide couples cysteine 1287 to cysteine 1313. A helical membrane pass occupies residues 1329–1349; the sequence is FIIAIIVCLALLLIILLAVVV. Residues 1350 to 1507 are Cytoplasmic-facing; sequence QKKQKNGWHE…NVDDDQGWRI (158 aa). An interaction with Inx2 region spans residues 1350 to 1507; sequence QKKQKNGWHE…NVDDDQGWRI (158 aa). A disordered region spans residues 1488-1507; sequence YGEEPSDTDSNVDDDQGWRI. At serine 1493 the chain carries Phosphoserine.

In terms of assembly, interacts (via cytoplasmic region) with Inx2 (via cytoplasmic loop). Interacts with Hakai. Interacts with Myo31DF. Post-translationally, N-glycosylation is important for biosynthesis and function. In terms of tissue distribution, in early stage 9 and stage 10 oocytes, expressed in border cells, strongly expressed in polar cells and very weakly expressed in the nurse cells (at protein level). In the embryo, expressed in the leading edge cells of the dorsal epidermis (at protein level). Stage 10 embryos exhibit intense expression in epithelial cells. Stage 14 embryos show expression in the hindgut (at the apical poles of cell-cell boundaries), at the apical junctions of tracheal cells and in the dorsal longitudinal trunk. In stage 16 embryos the glial midline cells of the central nervous system show strong expression.

The protein localises to the cell membrane. It is found in the apical cell membrane. Its function is as follows. Cadherins are calcium-dependent cell adhesion proteins. In connecting cells they preferentially interact with themselves in a homophilic manner; cadherins may thus contribute to the sorting of heterogeneous cell types. During oogenesis, integral component of the guidance mechanisms that regulate the directional persistent collective migration of the border cell (BC) cluster through the nurse cells to the oocyte. Functions downstream of the two chemoattractant receptors, Pvr and Egfr, to promote BC adhesion between the leader cells of the migrating cluster and the surrounding nurse cells. This adhesion increases Rac1 signaling in the leading cells, which in turn stabilizes DE-cadherin/DE-cadherin adhesions through the formation of forward-directed protrusions which attach/detach to the surrounding nurse cells in order to pull the cluster through the egg chamber to the oocyte. Within the BC cluster, also promotes adhesion between BCs, and between BCs and polar cells which enables the lead BC to communicate direction to the other cells in the cluster, providing polarity to each individual cell and ensuring collective behavior. May function in cell intercalation in the lateral epidermis during germband extension. Contributes to the determination of body left-right asymmetry by enhancing Myo31DF activity and inhibiting Myo61F activity. The protein is DE-cadherin of Drosophila melanogaster (Fruit fly).